Consider the following 143-residue polypeptide: MFMGEFQHQLDAKGRMIVPAKFREELTEHFVITRGLDKCLFGYTLTEWAAIEEKLKALPLTRRDARKFMRMFFSGAVEVEMDKQGRINIPKHLMEYAGLSKEATVIGVSSRIEIWDRKLWSDFYEETEEEFETIAEELIDFDF.

2 SpoVT-AbrB domains span residues 5–47 and 76–119; these read EFQH…TLTE and AVEV…DRKL.

This sequence belongs to the MraZ family. In terms of assembly, forms oligomers.

The protein localises to the cytoplasm. The protein resides in the nucleoid. The polypeptide is Transcriptional regulator MraZ (Macrococcus caseolyticus (strain JCSC5402) (Macrococcoides caseolyticum)).